We begin with the raw amino-acid sequence, 248 residues long: Myelin protein P0 (248 aa).

A signal peptide spans 1-29 (MAPGAPSSSPSPILAALLFSSLVLSPALA). The region spanning 30-143 (IVVYTDREIY…DIVGKTSQVT (114 aa)) is the Ig-like V-type domain. Topologically, residues 30–153 (IVVYTDREIY…LYVFEKVPTR (124 aa)) are extracellular. A disulfide bridge links cysteine 50 with cysteine 127. N-linked (GlcNAc...) (complex) asparagine glycosylation is present at asparagine 122. The helical transmembrane segment at 154 to 179 (YGVVLGAVIGGILGVVLLLLLLFYLI) threads the bilayer. The Cytoplasmic portion of the chain corresponds to 180-248 (RYCWLRRQAA…GLGESRKDKK (69 aa)). The residue at position 210 (serine 210) is a Phosphoserine; by PKC. A disordered region spans residues 222–248 (MLDHSRSTKAASEKKSKGLGESRKDKK). The span at 224–248 (DHSRSTKAASEKKSKGLGESRKDKK) shows a compositional bias: basic and acidic residues. A phosphoserine mark is found at serine 226 and serine 228. Position 233 is a phosphoserine; by PKC (serine 233). Phosphoserine occurs at positions 237 and 243.

Belongs to the myelin P0 protein family. In terms of assembly, homodimer and homotetramer. In terms of processing, N-glycosylated; contains sulfate-substituted glycan. In terms of tissue distribution, found only in peripheral nervous system Schwann cells.

It is found in the cell membrane. Its function is as follows. Is an adhesion molecule necessary for normal myelination in the peripheral nervous system. It mediates adhesion between adjacent myelin wraps and ultimately drives myelin compaction. This chain is Myelin protein P0 (Mpz), found in Mus musculus (Mouse).